The chain runs to 123 residues: WAP four-disulfide core domain protein 5 (123 aa).

An N-terminal signal peptide occupies residues 1-24 (MRTQSLLLLGALLAVGSQLPAVFG). WAP domains are found at residues 27–73 (KGEK…CVPR) and 74–121 (VSVK…RDPA). Disulfide bonds link Cys-34/Cys-62, Cys-41/Cys-66, Cys-49/Cys-61, Cys-55/Cys-70, Cys-81/Cys-109, Cys-88/Cys-113, Cys-96/Cys-108, and Cys-102/Cys-117.

The protein localises to the secreted. Functionally, putative acid-stable proteinase inhibitor. The chain is WAP four-disulfide core domain protein 5 (WFDC5) from Pan troglodytes (Chimpanzee).